The sequence spans 188 residues: V-type proton ATPase subunit E (188 aa).

Belongs to the V-ATPase E subunit family.

Its function is as follows. Produces ATP from ADP in the presence of a proton gradient across the membrane. The polypeptide is V-type proton ATPase subunit E (Dictyoglomus turgidum (strain DSM 6724 / Z-1310)).